The following is a 374-amino-acid chain: Eukaryotic translation initiation factor 3 subunit M (374 aa).

At Ser-2 the chain carries N-acetylserine. Ser-2 and Ser-152 each carry phosphoserine. One can recognise a PCI domain in the interval 180–339 (AASKVMVELL…RKVVVSHSTH (160 aa)). Lys-254 bears the N6-acetyllysine mark. Residues 344–374 (KQQWQQLYDTLNAWKQNLNKVKNSLLSLSDT) form an interaction with HSV-1 and HSV-2 region. At Ser-367 the chain carries Phosphoserine.

Component of the eukaryotic translation initiation factor 3 (eIF-3) complex, which is composed of 13 subunits: EIF3A, EIF3B, EIF3C, EIF3D, EIF3E, EIF3F, EIF3G, EIF3H, EIF3I, EIF3J, EIF3K, EIF3L and EIF3M. The eIF-3 complex appears to include 3 stable modules: module A is composed of EIF3A, EIF3B, EIF3G and EIF3I; module B is composed of EIF3F, EIF3H, and EIF3M; and module C is composed of EIF3C, EIF3D, EIF3E, EIF3K and EIF3L. EIF3C of module C binds EIF3B of module A and EIF3H of module B, thereby linking the three modules. EIF3J is a labile subunit that binds to the eIF-3 complex via EIF3B. The eIF-3 complex interacts with RPS6KB1 under conditions of nutrient depletion. Mitogenic stimulation leads to binding and activation of a complex composed of MTOR and RPTOR, leading to phosphorylation and release of RPS6KB1 and binding of EIF4B to eIF-3. As to expression, broadly expressed.

It is found in the cytoplasm. Component of the eukaryotic translation initiation factor 3 (eIF-3) complex, which is required for several steps in the initiation of protein synthesis. The eIF-3 complex associates with the 40S ribosome and facilitates the recruitment of eIF-1, eIF-1A, eIF-2:GTP:methionyl-tRNAi and eIF-5 to form the 43S pre-initiation complex (43S PIC). The eIF-3 complex stimulates mRNA recruitment to the 43S PIC and scanning of the mRNA for AUG recognition. The eIF-3 complex is also required for disassembly and recycling of post-termination ribosomal complexes and subsequently prevents premature joining of the 40S and 60S ribosomal subunits prior to initiation. The eIF-3 complex specifically targets and initiates translation of a subset of mRNAs involved in cell proliferation, including cell cycling, differentiation and apoptosis, and uses different modes of RNA stem-loop binding to exert either translational activation or repression. Its function is as follows. (Microbial infection) May favor virus entry in case of infection with herpes simplex virus 1 (HSV1) or herpes simplex virus 2 (HSV2). The sequence is that of Eukaryotic translation initiation factor 3 subunit M from Homo sapiens (Human).